A 199-amino-acid chain; its full sequence is NAD(P)H dehydrogenase (quinone) (199 aa).

The 187-residue stretch at 4 to 190 (VLVLYYSAYG…AGARYQGQVI (187 aa)) folds into the Flavodoxin-like domain. Residues 10–15 (SAYGHI) and 78–80 (TRF) each bind FMN. Tyr12 contributes to the NAD(+) binding site. Substrate is bound at residue Trp98. Residues 113–119 (STATQHG) and His134 each bind FMN.

This sequence belongs to the WrbA family. FMN is required as a cofactor.

It catalyses the reaction a quinone + NADH + H(+) = a quinol + NAD(+). The catalysed reaction is a quinone + NADPH + H(+) = a quinol + NADP(+). The sequence is that of NAD(P)H dehydrogenase (quinone) from Rhodopseudomonas palustris (strain BisA53).